Here is a 227-residue protein sequence, read N- to C-terminus: Probable GTP-binding protein EngB (227 aa).

The region spanning 41–216 (GRPEVAFAGR…RAEIARFAVP (176 aa)) is the EngB-type G domain. GTP-binding positions include 49-56 (GRSNVGKS), 76-80 (GRTKQ), 94-97 (DMPG), 161-164 (TKCD), and 195-197 (TSS). 2 residues coordinate Mg(2+): Ser-56 and Thr-78.

This sequence belongs to the TRAFAC class TrmE-Era-EngA-EngB-Septin-like GTPase superfamily. EngB GTPase family. Mg(2+) serves as cofactor.

Its function is as follows. Necessary for normal cell division and for the maintenance of normal septation. The protein is Probable GTP-binding protein EngB of Gluconobacter oxydans (strain 621H) (Gluconobacter suboxydans).